Consider the following 239-residue polypeptide: MDKRILVRLAIYPIAYVLWGGLMWYSQIITPLDVTNLLLKLPLCNKEFYIFLQSLPNIVIEFFKIIYLYGFSSMIIGGIAYYLFIKRDFLKSDIILIDLALGWLFAGLIYTFVVVKSPFQVGVAKDLINMHYFWIFTKPTYEIPSLHTAYSFLLALHFKDEKPLNYIYFALAILIPISTLIMGMHWIVDVITGVLYGYIIYKFPKTIHIKISKALDFLAGHIKPCILCGKCKERETHEK.

The next 4 helical transmembrane spans lie at 9–29 (LAIY…SQII), 65–85 (IIYL…YLFI), 94–114 (IILI…TFVV), and 167–187 (IYFA…MHWI).

The protein resides in the cell membrane. This is an uncharacterized protein from Methanocaldococcus jannaschii (strain ATCC 43067 / DSM 2661 / JAL-1 / JCM 10045 / NBRC 100440) (Methanococcus jannaschii).